The primary structure comprises 86 residues: Toxin 3FTx-Dis4 (86 aa).

Positions 1 to 19 (MKTLLLSLVMVGFMYLVSG) are cleaved as a signal peptide. Intrachain disulfides connect Cys-24/Cys-45, Cys-38/Cys-63, and Cys-79/Cys-84.

It belongs to the three-finger toxin family. Ancestral subfamily. In terms of tissue distribution, expressed by the venom gland.

The protein resides in the secreted. This Dispholidus typus (Boomslang) protein is Toxin 3FTx-Dis4.